A 336-amino-acid polypeptide reads, in one-letter code: MTLAYIPSPTISQFSIGPVTIHFYALCILLGIVLAVWMTTVHWKRYGGNFDQILDITLVAVPSGIIGARIYHIITTPERFFGPTGDWVEMFRIWNGGLGIWGGVLLGALAAWAWCRHKHYPMALLGDAVAPGLLVAQAVGRLGNWFNQELYGAPTTLPWGLKLNMEGSAIGHSEQCYDGATCPTGTLFHPTFLYEMIWNLIGAALIVFLGSKIMKKLKAGSLFAIYIMWYTVGRTWIEALRIDFAHEFLGVRINVWVSMAVFVLGVVAFIVIQQMGKSTELLAEKLRTVTEIELSLVEDGETGLPTAKANLTKTKDEITANDGSSVSYADDQSDNK.

The next 3 membrane-spanning stretches (helical) occupy residues 16 to 36, 53 to 73, and 93 to 113; these read IGPV…VLAV, ILDI…IYHI, and IWNG…AAWA. Arg-141 contacts a 1,2-diacyl-sn-glycero-3-phospho-(1'-sn-glycerol). 3 consecutive transmembrane segments (helical) span residues 190 to 210, 220 to 240, and 253 to 273; these read PTFL…VFLG, GSLF…IEAL, and INVW…IVIQ.

The protein belongs to the Lgt family.

Its subcellular location is the cell membrane. It catalyses the reaction L-cysteinyl-[prolipoprotein] + a 1,2-diacyl-sn-glycero-3-phospho-(1'-sn-glycerol) = an S-1,2-diacyl-sn-glyceryl-L-cysteinyl-[prolipoprotein] + sn-glycerol 1-phosphate + H(+). It functions in the pathway protein modification; lipoprotein biosynthesis (diacylglyceryl transfer). Its function is as follows. Catalyzes the transfer of the diacylglyceryl group from phosphatidylglycerol to the sulfhydryl group of the N-terminal cysteine of a prolipoprotein, the first step in the formation of mature lipoproteins. The polypeptide is Phosphatidylglycerol--prolipoprotein diacylglyceryl transferase (Bifidobacterium adolescentis (strain ATCC 15703 / DSM 20083 / NCTC 11814 / E194a)).